The following is a 601-amino-acid chain: MTNKDARTPASSQTGEALASPQGDQEAGKSIGWHKAYVAGSRPDLRVPVRQVHLTNGESVTLYDTSGPYTDPSVDTDVRRGLAPLRENWIIARGDTEEYAGRPVRPEDDGIKHTSPRGGLRNLDAVFPGRPRQPRRGRDGQAVTQLAYARRGEITPEMEFVAVRENVSAEVVREEIAAGRAVMPVNVNHPEIEPMIIGKRFLVKVNANIGNSAVTSSIEEEVEKMTWATRWGADTVMDLSTGRNIHTTREWVLRNSPVPIGTVPLYQALEKVDGRAEELTWEIYKDTVIEQAEQGVDYMTVHAGVRLPYVPLTANRKTGIVSRGGSIMAAWCLAHHKESFLYENFEELCEILAAYDVTYSLGDGLRPGSIADANDEAQFAELRTLGELNRIAKRFNVQTMIEGPGHVPMHKIKENIDLQQEICDEAPFYTLGPLTTDVAPAYDHITSGIGAAMIAWWGTAMLCYVTPKEHLGLPNRDDVKTGVITYKIAAHAADLAKGHPGAQEWDDALSDARFEFRWEDQFNLALDPDTAREFHDETLPAEPAKTAHFCSMCGPKFCSMKISQDIRREHGGTRTEVEEGMAQKSKEFAAAGNRVYLPLAD.

Disordered regions lie at residues 1–31 and 100–141; these read MTNK…GKSI and AGRP…RDGQ. A compositionally biased stretch (basic and acidic residues) spans 100-112; the sequence is AGRPVRPEDDGIK. Substrate-binding positions include N208, M237, Y266, H302, 322–324, 363–366, and E402; these read SRG and DGLR. Residue H406 coordinates Zn(2+). Y429 contacts substrate. H470 provides a ligand contact to Zn(2+). 3 residues coordinate [4Fe-4S] cluster: C550, C553, and C558.

This sequence belongs to the ThiC family. Requires [4Fe-4S] cluster as cofactor.

The catalysed reaction is 5-amino-1-(5-phospho-beta-D-ribosyl)imidazole + S-adenosyl-L-methionine = 4-amino-2-methyl-5-(phosphooxymethyl)pyrimidine + CO + 5'-deoxyadenosine + formate + L-methionine + 3 H(+). It functions in the pathway cofactor biosynthesis; thiamine diphosphate biosynthesis. Its function is as follows. Catalyzes the synthesis of the hydroxymethylpyrimidine phosphate (HMP-P) moiety of thiamine from aminoimidazole ribotide (AIR) in a radical S-adenosyl-L-methionine (SAM)-dependent reaction. This Streptomyces avermitilis (strain ATCC 31267 / DSM 46492 / JCM 5070 / NBRC 14893 / NCIMB 12804 / NRRL 8165 / MA-4680) protein is Phosphomethylpyrimidine synthase.